Consider the following 420-residue polypeptide: Exodeoxyribonuclease 7 large subunit (420 aa).

This sequence belongs to the XseA family. Heterooligomer composed of large and small subunits.

Its subcellular location is the cytoplasm. The catalysed reaction is Exonucleolytic cleavage in either 5'- to 3'- or 3'- to 5'-direction to yield nucleoside 5'-phosphates.. Its function is as follows. Bidirectionally degrades single-stranded DNA into large acid-insoluble oligonucleotides, which are then degraded further into small acid-soluble oligonucleotides. In Helicobacter pylori (strain HPAG1), this protein is Exodeoxyribonuclease 7 large subunit.